Here is a 428-residue protein sequence, read N- to C-terminus: Isocitrate dehydrogenase [NADP], mitochondrial (428 aa).

Residues Met-1–Ala-16 constitute a mitochondrion transit peptide. Residues Thr-91–Thr-93 and Arg-98 each bind NADP(+). Residue Thr-93 participates in substrate binding. Residues Ser-110 to Arg-116, Arg-125, and Arg-148 contribute to the substrate site. Mn(2+) is bound at residue Asp-269. Lys-277 lines the NADP(+) pocket. Asp-292 provides a ligand contact to Mn(2+). Residues Gly-327–His-332 and Asn-345 each bind NADP(+).

It belongs to the isocitrate and isopropylmalate dehydrogenases family. As to quaternary structure, homodimer. Mg(2+) serves as cofactor. Mn(2+) is required as a cofactor.

It is found in the mitochondrion. The catalysed reaction is D-threo-isocitrate + NADP(+) = 2-oxoglutarate + CO2 + NADPH. Its activity is regulated as follows. The enzyme is subject to end product inhibition by NADPH and 2-oxoglutarate. Its function is as follows. Mitochondrial IDP1 may regulate flux through the tricarboxylic acid cycle and respiration. Its probably critical function is the production of NADPH. The polypeptide is Isocitrate dehydrogenase [NADP], mitochondrial (IDP1) (Saccharomyces cerevisiae (strain ATCC 204508 / S288c) (Baker's yeast)).